The primary structure comprises 449 residues: Adenosylhomocysteinase (449 aa).

Ser-2 carries the N-acetylserine modification. A Glycyl lysine isopeptide (Lys-Gly) (interchain with G-Cter in ubiquitin) cross-link involves residue Lys-21. Substrate contacts are provided by Thr-58, Asp-134, and Glu-159. Residue 160 to 162 (TTT) participates in NAD(+) binding. Substrate-binding residues include Lys-189 and Asp-193. NAD(+) is bound by residues Asn-194, 223 to 228 (GYGDVG), Glu-246, 302 to 304 (IGH), and Asn-349. The residue at position 393 (Thr-393) is a Phosphothreonine. A Glycyl lysine isopeptide (Lys-Gly) (interchain with G-Cter in ubiquitin) cross-link involves residue Lys-413.

Belongs to the adenosylhomocysteinase family. NAD(+) serves as cofactor.

It carries out the reaction S-adenosyl-L-homocysteine + H2O = L-homocysteine + adenosine. It participates in amino-acid biosynthesis; L-homocysteine biosynthesis; L-homocysteine from S-adenosyl-L-homocysteine: step 1/1. Its function is as follows. Adenosylhomocysteine is a competitive inhibitor of S-adenosyl-L-methionine-dependent methyl transferase reactions; therefore adenosylhomocysteinase may play a key role in the control of methylations via regulation of the intracellular concentration of adenosylhomocysteine. The protein is Adenosylhomocysteinase (SAH1) of Saccharomyces cerevisiae (strain ATCC 204508 / S288c) (Baker's yeast).